Consider the following 146-residue polypeptide: Large ribosomal subunit protein uL13 (146 aa).

It belongs to the universal ribosomal protein uL13 family. Part of the 50S ribosomal subunit.

Functionally, this protein is one of the early assembly proteins of the 50S ribosomal subunit, although it is not seen to bind rRNA by itself. It is important during the early stages of 50S assembly. This Spiroplasma citri protein is Large ribosomal subunit protein uL13.